A 595-amino-acid chain; its full sequence is MHRYRSHTCAALRKTDVGSNVRLSGWVHRVRDHGGILFIDLRDHYGITQIVADPDSPAFKVAETVRGEWVIRVDGEVKARAGDAVNTNLPTGEVEIFATEIEVLAAAKELPLPVFGEPDYPEDIRLKYRFLDLRRETLHKNIMSRTKIIAAMRRRMTEIGFNEFTTPILTASSPEGARDFLVPSRIHEGKFYALPQAPQQYKQLLMVAGFDRYFQIAPCFRDEDPRADRLPGEFYQLDLEMSFVTQEEVWETMEPVMRGIFEEFAEGKPVTQQFRRIAYDDAIRTYGSDKPDLRNPIEMQAVTEHFAGSGFKVFANMIANDPKVEVWAIPAKTGGSRAFCDRMNSWAQSEGQPGLGYIFWRKEGDKLEGAGPIAKNIGEERTEAIRTQMGLEDGDACFFVAGLPSKFYKFAGDARTRAGEELNLVDRDRFELAWIIDFPFYEWDEDNKKLDFAHNPFSMPQGGMDALENQDPLAIKAYQYDLVCNGFEIASGSIRNQLPDVMVKAFEKVGLSQQDVEERFGGLYRAFQYGAPPHGGMAAGIDRVIMLLVGAKNLREISLFPMNQQALDLLMNAPSDVSPAQLRDLHIRLAPVQKS.

E175 provides a ligand contact to L-aspartate. The segment at 199–202 (QQYK) is aspartate. L-aspartate-binding residues include R221 and H454. 221–223 (RDE) is a binding site for ATP. E488 is a binding site for ATP. L-aspartate is bound at residue R495. 540-543 (GIDR) is an ATP binding site.

Belongs to the class-II aminoacyl-tRNA synthetase family. Type 1 subfamily. Homodimer.

Its subcellular location is the cytoplasm. The catalysed reaction is tRNA(Asx) + L-aspartate + ATP = L-aspartyl-tRNA(Asx) + AMP + diphosphate. In terms of biological role, aspartyl-tRNA synthetase with relaxed tRNA specificity since it is able to aspartylate not only its cognate tRNA(Asp) but also tRNA(Asn). Reaction proceeds in two steps: L-aspartate is first activated by ATP to form Asp-AMP and then transferred to the acceptor end of tRNA(Asp/Asn). The sequence is that of Aspartate--tRNA(Asp/Asn) ligase from Brucella anthropi (strain ATCC 49188 / DSM 6882 / CCUG 24695 / JCM 21032 / LMG 3331 / NBRC 15819 / NCTC 12168 / Alc 37) (Ochrobactrum anthropi).